A 351-amino-acid polypeptide reads, in one-letter code: Uroporphyrinogen decarboxylase (351 aa).

Substrate-binding positions include 25 to 29 (RQAGR), aspartate 74, tyrosine 151, serine 206, and histidine 325.

It belongs to the uroporphyrinogen decarboxylase family. As to quaternary structure, homodimer.

It localises to the cytoplasm. It carries out the reaction uroporphyrinogen III + 4 H(+) = coproporphyrinogen III + 4 CO2. It participates in porphyrin-containing compound metabolism; protoporphyrin-IX biosynthesis; coproporphyrinogen-III from 5-aminolevulinate: step 4/4. Catalyzes the decarboxylation of four acetate groups of uroporphyrinogen-III to yield coproporphyrinogen-III. The protein is Uroporphyrinogen decarboxylase of Chlorobium limicola (strain DSM 245 / NBRC 103803 / 6330).